A 71-amino-acid polypeptide reads, in one-letter code: General transcription factor IIH subunit 5 (71 aa).

Thr69 bears the Phosphothreonine mark.

It belongs to the TFB5 family. As to quaternary structure, component of the 7-subunit TFIIH core complex composed of XPB/ERCC3, XPD/ERCC2, GTF2H1, GTF2H2, GTF2H3, GTF2H4 and GTF2H5, which is active in NER. The core complex associates with the 3-subunit CDK-activating kinase (CAK) module composed of CCNH/cyclin H, CDK7 and MNAT1 to form the 10-subunit holoenzyme (holo-TFIIH) active in transcription. Part of TBP-based Pol II pre-initiation complex (PIC), in which Pol II core assembles with general transcription factors and other specific initiation factors including GTF2E1, GTF2E2, GTF2F1, GTF2F2, TCEA1, ERCC2, ERCC3, GTF2H2, GTF2H3, GTF2H4, GTF2H5, GTF2A1, GTF2A2, GTF2B and TBP; this large multi-subunit PIC complex mediates DNA unwinding and targets Pol II core to the transcription start site where the first phosphodiester bond forms.

The protein localises to the nucleus. It is found in the cytoplasm. Its function is as follows. Component of the general transcription and DNA repair factor IIH (TFIIH) core complex, which is involved in general and transcription-coupled nucleotide excision repair (NER) of damaged DNA and, when complexed to CAK, in RNA transcription by RNA polymerase II. In NER, TFIIH acts by opening DNA around the lesion to allow the excision of the damaged oligonucleotide and its replacement by a new DNA fragment. In transcription, TFIIH has an essential role in transcription initiation. When the pre-initiation complex (PIC) has been established, TFIIH is required for promoter opening and promoter escape. Phosphorylation of the C-terminal tail (CTD) of the largest subunit of RNA polymerase II by the kinase module CAK controls the initiation of transcription. Necessary for the stability of the TFIIH complex and for the presence of normal levels of TFIIH in the cell. The polypeptide is General transcription factor IIH subunit 5 (Mus musculus (Mouse)).